Reading from the N-terminus, the 29-residue chain is Cyclotide mden-F (29 aa).

The cyclopeptide (Gly-Asn) cross-link spans 1–29 (GLPICGETCFFGKCNTPKCTCINPICYKN). 3 cysteine pairs are disulfide-bonded: Cys5/Cys19, Cys9/Cys21, and Cys14/Cys26.

It belongs to the cyclotide family. This is a cyclic peptide.

Probably participates in a plant defense mechanism. The sequence is that of Cyclotide mden-F from Melicytus dentatus (Tree violet).